Here is a 633-residue protein sequence, read N- to C-terminus: Chaperone protein HtpG (633 aa).

The segment at 1-341 (MTAPHETMSF…SADLPLNVSR (341 aa)) is a; substrate-binding. The b stretch occupies residues 342 to 562 (ELLQESRDVK…DGDMSGYLQR (221 aa)). Positions 563-633 (LLKQAGQKAP…YVQRVNRLLA (71 aa)) are c.

This sequence belongs to the heat shock protein 90 family. Homodimer.

The protein localises to the cytoplasm. In terms of biological role, molecular chaperone. Has ATPase activity. The chain is Chaperone protein HtpG from Cupriavidus metallidurans (strain ATCC 43123 / DSM 2839 / NBRC 102507 / CH34) (Ralstonia metallidurans).